A 283-amino-acid chain; its full sequence is uncharacterized protein (283 aa).

The protein belongs to the glycosyltransferase 2 family. WaaE/KdtX subfamily.

This is an uncharacterized protein from Rickettsia felis (strain ATCC VR-1525 / URRWXCal2) (Rickettsia azadi).